Reading from the N-terminus, the 78-residue chain is ATP synthase subunit c (78 aa).

Transmembrane regions (helical) follow at residues leucine 16 to leucine 36 and methionine 57 to valine 77.

It belongs to the ATPase C chain family. F-type ATPases have 2 components, F(1) - the catalytic core - and F(0) - the membrane proton channel. F(1) has five subunits: alpha(3), beta(3), gamma(1), delta(1), epsilon(1). F(0) has three main subunits: a(1), b(2) and c(10-14). The alpha and beta chains form an alternating ring which encloses part of the gamma chain. F(1) is attached to F(0) by a central stalk formed by the gamma and epsilon chains, while a peripheral stalk is formed by the delta and b chains.

It is found in the cell inner membrane. Functionally, f(1)F(0) ATP synthase produces ATP from ADP in the presence of a proton or sodium gradient. F-type ATPases consist of two structural domains, F(1) containing the extramembraneous catalytic core and F(0) containing the membrane proton channel, linked together by a central stalk and a peripheral stalk. During catalysis, ATP synthesis in the catalytic domain of F(1) is coupled via a rotary mechanism of the central stalk subunits to proton translocation. Key component of the F(0) channel; it plays a direct role in translocation across the membrane. A homomeric c-ring of between 10-14 subunits forms the central stalk rotor element with the F(1) delta and epsilon subunits. This chain is ATP synthase subunit c, found in Hyphomonas neptunium (strain ATCC 15444).